A 207-amino-acid chain; its full sequence is Ras-related protein Rab7A (207 aa).

Residues 15–22 (GDSGVGKT), 63–67 (DTAGQ), and 125–128 (NKID) each bind GTP. S-geranylgeranyl cysteine attachment occurs at residues Cys-205 and Cys-207. Cys-207 is modified (cysteine methyl ester).

The protein belongs to the small GTPase superfamily. Rab family.

The protein resides in the cell membrane. In terms of biological role, protein transport. Probably involved in vesicular traffic. In Mesembryanthemum crystallinum (Common ice plant), this protein is Ras-related protein Rab7A.